The sequence spans 278 residues: Tyrosine-protein phosphatase pmp1 (278 aa).

Residues 60-214 (GPVCIYPPNI…LSEYQQIIRK (155 aa)) form the Tyrosine-protein phosphatase domain. C158 functions as the Phosphocysteine intermediate in the catalytic mechanism. Residues 217-278 (SQGPYQSSSL…SSGSISNDAS (62 aa)) form a disordered region. A compositionally biased stretch (polar residues) spans 252 to 278 (SPSTSESSMFTNLRRTRSSGSISNDAS).

It belongs to the protein-tyrosine phosphatase family. Non-receptor class dual specificity subfamily.

The enzyme catalyses O-phospho-L-tyrosyl-[protein] + H2O = L-tyrosyl-[protein] + phosphate. Dual specificity phosphatase that dephosphorylates MAP kinase pmk1 on a Tyr. Has a role in chloride ion homeostasis by inactivating this pmk1 MAP kinase pathway. The sequence is that of Tyrosine-protein phosphatase pmp1 (pmp1) from Schizosaccharomyces pombe (strain 972 / ATCC 24843) (Fission yeast).